A 159-amino-acid polypeptide reads, in one-letter code: Phosphopantetheine adenylyltransferase (159 aa).

Thr10 contacts substrate. Residues 10–11 (TF) and His18 contribute to the ATP site. Substrate-binding residues include Lys42, Met74, and Arg88. Residues 89 to 91 (GLR), Glu99, and 124 to 130 (WSFISSS) each bind ATP.

This sequence belongs to the bacterial CoaD family. In terms of assembly, homohexamer. Mg(2+) is required as a cofactor.

It localises to the cytoplasm. The enzyme catalyses (R)-4'-phosphopantetheine + ATP + H(+) = 3'-dephospho-CoA + diphosphate. Its pathway is cofactor biosynthesis; coenzyme A biosynthesis; CoA from (R)-pantothenate: step 4/5. Reversibly transfers an adenylyl group from ATP to 4'-phosphopantetheine, yielding dephospho-CoA (dPCoA) and pyrophosphate. The sequence is that of Phosphopantetheine adenylyltransferase from Salmonella choleraesuis (strain SC-B67).